The following is an 88-amino-acid chain: Small ribosomal subunit protein uS15 (88 aa).

This sequence belongs to the universal ribosomal protein uS15 family. As to quaternary structure, part of the 30S ribosomal subunit. Forms a bridge to the 50S subunit in the 70S ribosome, contacting the 23S rRNA.

One of the primary rRNA binding proteins, it binds directly to 16S rRNA where it helps nucleate assembly of the platform of the 30S subunit by binding and bridging several RNA helices of the 16S rRNA. Its function is as follows. Forms an intersubunit bridge (bridge B4) with the 23S rRNA of the 50S subunit in the ribosome. The polypeptide is Small ribosomal subunit protein uS15 (Metamycoplasma arthritidis (strain 158L3-1) (Mycoplasma arthritidis)).